The sequence spans 61 residues: Small ribosomal subunit protein uS14 (61 aa).

The Zn(2+) site is built by Cys-24, Cys-27, Cys-40, and Cys-43.

It belongs to the universal ribosomal protein uS14 family. Zinc-binding uS14 subfamily. As to quaternary structure, part of the 30S ribosomal subunit. Contacts proteins S3 and S10. Zn(2+) serves as cofactor.

Functionally, binds 16S rRNA, required for the assembly of 30S particles and may also be responsible for determining the conformation of the 16S rRNA at the A site. In Geobacillus stearothermophilus (Bacillus stearothermophilus), this protein is Small ribosomal subunit protein uS14.